The chain runs to 256 residues: MSKQSVAQVRALLSSITDPQDPRLAEFKDDPRKGVQAALNQFAKRLEKRAEARAAFLNRFRYENQLWQAGHQYVAGIDEVGRGPLAGPVVTCAVVLDSQFDLVGVTDSKQLSRHEREQLYLRILDEAVEVSLAVSPAQEIDRLNIYAATQTAMIRSVKALHHQPSHLIVDAVPLDIPVPQTTLIKGDQKSISVAAASIVAKEYRDHLMAIYDRLYPGYGFKDNMGYGTAAHLAGLEQLGACPIHRRTFRPVPDYVN.

The RNase H type-2 domain maps to 72-256 (QYVAGIDEVG…TFRPVPDYVN (185 aa)). 3 residues coordinate a divalent metal cation: Asp-78, Glu-79, and Asp-170.

This sequence belongs to the RNase HII family. It depends on Mn(2+) as a cofactor. Requires Mg(2+) as cofactor.

It localises to the cytoplasm. It carries out the reaction Endonucleolytic cleavage to 5'-phosphomonoester.. In terms of biological role, endonuclease that specifically degrades the RNA of RNA-DNA hybrids. The chain is Ribonuclease HII from Limosilactobacillus fermentum (strain NBRC 3956 / LMG 18251) (Lactobacillus fermentum).